A 220-amino-acid polypeptide reads, in one-letter code: Deoxyribose-phosphate aldolase 2 (220 aa).

Catalysis depends on D89, which acts as the Proton donor/acceptor. The active-site Schiff-base intermediate with acetaldehyde is the K151. K180 (proton donor/acceptor) is an active-site residue.

This sequence belongs to the DeoC/FbaB aldolase family. DeoC type 1 subfamily.

The protein resides in the cytoplasm. It catalyses the reaction 2-deoxy-D-ribose 5-phosphate = D-glyceraldehyde 3-phosphate + acetaldehyde. It functions in the pathway carbohydrate degradation; 2-deoxy-D-ribose 1-phosphate degradation; D-glyceraldehyde 3-phosphate and acetaldehyde from 2-deoxy-alpha-D-ribose 1-phosphate: step 2/2. Functionally, catalyzes a reversible aldol reaction between acetaldehyde and D-glyceraldehyde 3-phosphate to generate 2-deoxy-D-ribose 5-phosphate. The polypeptide is Deoxyribose-phosphate aldolase 2 (Staphylococcus aureus (strain N315)).